The primary structure comprises 1984 residues: Sodium channel protein type 9 subunit alpha (1984 aa).

Residues 1–125 lie on the Cytoplasmic side of the membrane; that stretch reads MAMLPPPGPQ…RRISIKILVH (125 aa). Residues 26–39 are compositionally biased toward basic and acidic residues; sequence RISEEKAKGHKDEK. Positions 26–55 are disordered; the sequence is RISEEKAKGHKDEKKDDEEEGPKPSSDLEA. The stretch at 112–410 is one I repeat; the sequence is FSPLRRISIK…VAMAYEEQNQ (299 aa). Residues 126–145 form a helical membrane-spanning segment; it reads SLFSMLIMCTILTNCIFMTM. Over 146–150 the chain is Extracellular; the sequence is SNPPD. Residues 151-172 traverse the membrane as a helical segment; the sequence is WTKNVEYTFTGIYTFESLIKIL. Over 173–185 the chain is Cytoplasmic; that stretch reads ARGFCVGEFTFLR. A helical transmembrane segment spans residues 186–204; that stretch reads DPWNWLDFVVIVFAYLTEF. Over 205-210 the chain is Extracellular; sequence VNLGNV. A helical transmembrane segment spans residues 211–227; sequence SALRTFRVLRALKTISV. Topologically, residues 228-241 are cytoplasmic; that stretch reads IPGLKTIVGALIQS. A helical membrane pass occupies residues 242–267; that stretch reads VKKLSDVMILTVFCLSVFALIGLQLF. The Extracellular segment spans residues 268–346; the sequence is MGNLKHKCFR…PDYGYTSFDT (79 aa). The cysteines at positions 275 and 324 are disulfide-linked. Positions 347–363 form an intramembrane region, pore-forming; the sequence is FGWAFLALFRLMTQDYW. The Extracellular portion of the chain corresponds to 364–376; the sequence is ENLYQQTLRAAGK. The chain crosses the membrane as a helical span at residues 377–402; sequence TYMIFFVVVIFLGSFYLINLILAVVA. The stretch at 402-449 forms a coiled coil; that stretch reads AMAYEEQNQANIEEAKQKELEFQQMLDRLKKEQEEAEAIAAAAAEYTS. Residues 403–744 lie on the Cytoplasmic side of the membrane; the sequence is MAYEEQNQAN…FIYFIVMDPF (342 aa). Over residues 458–471 the composition is skewed to low complexity; it reads LSESSSETSRLSSK. Disordered stretches follow at residues 458 to 540 and 574 to 609; these read LSES…SIRG and HSIF…RSPP. Over residues 474 to 486 the composition is skewed to basic residues; sequence KERRNRRKKKKQK. 2 stretches are compositionally biased toward basic and acidic residues: residues 489-509 and 574-584; these read SGEE…ESIR and HSIFGDNESRR. Positions 684–708 form a coiled coil; sequence LRQRAMSRASILTNTVEELEESRQK. The II repeat unit spans residues 725 to 988; the sequence is CSPYWIKFKK…EEDTDANNLQ (264 aa). Residues 745–761 traverse the membrane as a helical segment; sequence VDLAITICIVLNTLFMA. Residues 762–770 lie on the Extracellular side of the membrane; sequence MEHHPMTDE. A helical membrane pass occupies residues 771 to 795; the sequence is FKNVLAVGNLVFTGIFAAEMVLKLI. Topologically, residues 796–804 are cytoplasmic; it reads AMDPYEYFQ. Residues 805–821 form a helical membrane-spanning segment; it reads VGWNIFDSLIVTLSLVE. Residues 822–830 lie on the Extracellular side of the membrane; that stretch reads LFLADVEGL. Residues 831 to 847 form a helical membrane-spanning segment; sequence SVLRSFRLLRVFKLAKS. The Cytoplasmic segment spans residues 848–864; the sequence is WPTLNMLIKIIGNSVGA. The helical transmembrane segment at 865–887 threads the bilayer; sequence LGNLTLVLAIIVFIFAVVGMQLF. Residues 888-914 lie on the Extracellular side of the membrane; it reads GKSYKECVCKINENCKLPRWHMNDFFH. C896 and C902 form a disulfide bridge. Residues 915–927 constitute an intramembrane region (pore-forming); that stretch reads SFLIVFRVLCGEW. Residues 928–939 are Extracellular-facing; the sequence is IETMWDCMEVAG. C934 and C943 are joined by a disulfide. The chain crosses the membrane as a helical span at residues 940–966; it reads QTMCLIVYMMVMVIGNLVVLNLFLALL. Over 967–1185 the chain is Cytoplasmic; sequence LSSFSSDNLT…WWTIRKTCYR (219 aa). Disordered regions lie at residues 1015–1039 and 1089–1145; these read KKPK…YISN and PIAP…EPIN. Residues 1019–1035 show a composition bias toward basic and acidic residues; the sequence is GSKDTKRTADPNNKREN. Residues 1135–1145 are compositionally biased toward acidic residues; the sequence is GEEEAEAEPIN. The stretch at 1178 to 1486 is one III repeat; sequence TIRKTCYRIV…KKYYNAMKKL (309 aa). The chain crosses the membrane as a helical span at residues 1186 to 1210; sequence IVEHSWFESFIVLMILLSSGALAFE. Topologically, residues 1211 to 1222 are extracellular; it reads DIYIEKKKTIKI. The helical transmembrane segment at 1223 to 1248 threads the bilayer; the sequence is ILEYADKIFTYIFILEMLLKWVAYGY. Topologically, residues 1249–1250 are cytoplasmic; it reads KT. The helical transmembrane segment at 1251–1276 threads the bilayer; that stretch reads YFTNAWCWLDFLIVDVSLVTLVANTL. Residues 1277 to 1285 lie on the Extracellular side of the membrane; that stretch reads GYSDLGPIK. Residues 1286-1302 form a helical membrane-spanning segment; sequence SLRTLRALRPLRALSRF. The Cytoplasmic portion of the chain corresponds to 1303–1315; it reads EGMRVVVNALIGA. Residues 1316 to 1340 traverse the membrane as a helical segment; it reads IPSIMNVLLVCLIFWLIFSIMGVNL. Residues 1341-1392 are Extracellular-facing; the sequence is FAGKFYECVNTTDGSRFSVSQVANRSECFALMNVSGNVRWKNLKVNFDNVGL. Cysteines 1348 and 1368 form a disulfide. The pore-forming intramembrane region spans 1393-1403; the sequence is GYLSLLQVATF. Residues 1404 to 1429 lie on the Extracellular side of the membrane; it reads KGWMDIMYAAVDSVNVNAQPIYEYNL. A helical membrane pass occupies residues 1430–1455; that stretch reads YMYIYFVIFIIFGSFFTLNLFIGVII. Topologically, residues 1456-1512 are cytoplasmic; it reads DNFNQQKKKLGGQDIFMTEEQKKYYNAMKKLGSKKPQKPIPRPGNKFQGCIFDLVTN. S1488 is subject to Phosphoserine; by PKC. An IV repeat occupies 1495-1793; that stretch reads IPRPGNKFQG…WEKFDPDATQ (299 aa). Residues 1513–1532 form a helical membrane-spanning segment; that stretch reads QAFDITIMVLICLNMVTMMV. Topologically, residues 1533 to 1543 are extracellular; it reads EKEGQTDYMSF. Residues 1544-1565 traverse the membrane as a helical segment; sequence VLYWINVVFIILFTGECVLKLI. Over 1566–1574 the chain is Cytoplasmic; sequence SLRHYYFTV. Residues 1575–1596 form a helical membrane-spanning segment; that stretch reads GWNIFDFVVVILSIVGMFLAEM. Topologically, residues 1597–1605 are extracellular; sequence IEKYFVSPT. The helical transmembrane segment at 1606 to 1625 threads the bilayer; it reads LFRVIRLARIGRILRLIKGA. At 1626-1638 the chain is on the cytoplasmic side; the sequence is KGIRTLLFALMMS. A helical membrane pass occupies residues 1639–1661; that stretch reads LPALFNIGLLLFLVMFIYAIFGM. At 1662-1684 the chain is on the extracellular side; it reads SNFAYVKKEAGINDMFNFETFGN. Residues 1685–1697 constitute an intramembrane region (pore-forming); it reads SMICLFQITTSAG. Residues 1698-1731 lie on the Extracellular side of the membrane; the sequence is WDGLLAPILNSAPPDCDPKKVHPGSSVEGDCGNP. C1713 and C1728 form a disulfide bridge. Residues 1732-1757 form a helical membrane-spanning segment; it reads SVGIFYFVSYIIISFLVVVNMYIAVI. At 1758-1984 the chain is on the cytoplasmic side; it reads LENFSVATEE…EDKEKDESRK (227 aa). The region spanning 1887 to 1916 is the IQ domain; the sequence is EDVSATIIQRAYRRYRLRQNVKNISSIYIK. The tract at residues 1933 to 1984 is disordered; the sequence is DNVNENSSPEKTDATASTISPPSYDSVTKPDQEKYETDKTEKEDKEKDESRK. The span at 1946–1958 shows a compositional bias: polar residues; that stretch reads ATASTISPPSYDS. The segment covering 1960 to 1984 has biased composition (basic and acidic residues); it reads TKPDQEKYETDKTEKEDKEKDESRK.

This sequence belongs to the sodium channel (TC 1.A.1.10) family. Nav1.7/SCN9A subfamily. In terms of assembly, the Nav1.7 voltage-gated sodium channel consists of an ion-conducting alpha subunit SCN9A which is functional on its own regulated by one or more beta-1 (SCN1B), beta-2 (SCN2B), beta-3 (SCN3B) and beta-4 (SCN4B) subunits. SCN1B and SCN3B are non-covalently associated with SCN9A. SCN2B and SCN4B are disulfide-linked to SCN9A. SCN1B regulates channel inactivation. Interacts with NEDD4 and NEDD4L; regulates Nav1.7 activity most probably through ubiquitination and subsequent endocytosis. Interacts with TMEM233; modulates the gating properties of NaV1.7. In terms of processing, ubiquitinated by NEDD4L; which may promote its endocytosis. Phosphorylation at Ser-1488 by PKC in a highly conserved cytoplasmic loop increases peak sodium currents. In terms of tissue distribution, expressed strongly in sciatic nerves, with moderate levels in kidney. Not detected in liver, brain and muscle.

The protein resides in the cell membrane. The protein localises to the cell projection. It is found in the neuron projection. It localises to the axon. It carries out the reaction Na(+)(in) = Na(+)(out). Its function is as follows. Pore-forming subunit of Nav1.7, a voltage-gated sodium (Nav) channel that directly mediates the depolarizing phase of action potentials in excitable membranes. Navs, also called VGSCs (voltage-gated sodium channels) or VDSCs (voltage-dependent sodium channels), operate by switching between closed and open conformations depending on the voltage difference across the membrane. In the open conformation they allow Na(+) ions to selectively pass through the pore, along their electrochemical gradient. The influx of Na(+) ions provokes membrane depolarization, initiating the propagation of electrical signals throughout cells and tissues. Nav1.7 plays a crucial role in controlling the excitability and action potential propagation from nociceptor neurons, thereby contributing to the sensory perception of pain. The chain is Sodium channel protein type 9 subunit alpha from Mus musculus (Mouse).